The primary structure comprises 526 residues: MTENVNSSGDSAIKSEDKEEVTVIQEGQAKVGFHGPVFYNPVQEFNRDLTVTVLRQFSADHQKWAEEQKQLKTEEEPPKKKNKLAINEDGKIRILDALSASGLRALRFSKEVPNVGFIMANDFSDNAVASIQENVKLNGVEDIVEAHFGDAVMTMMEHRGIDKRFHAVDLDPYGTASTFLDSAVQCVADRGILMVTCTDMAVLCGNTPEACYNKYDAVTTRMKCCHEVGLRILLRAIDSAANRYTRYIEPLVSISVDFYVRVFVRVHTGAFQAKQSGTKVGTVLVCSGCHSMEPLVLLKRGEGNQQSKYSIPTVRHSISGPGNRCIHCLLPLHQIGPIYLAPIHSKPFVTSLLERLKSTPEAERLGTHGRLQGVLTMVNEELDDVLYYEHNQMANVVKVSVPKSQSVRSAILNAGFKVSGSHCNPRAIKTNAPMHLLWDIYRQVAKDTSVDREKRLAKESAGYHILGQPITNTVNFTLHPGAIEQAKKENLVRFQCNKGKNWGPRQKAKGSVNSTKAGFQLTEHKE.

The segment covering 1–10 (MTENVNSSGD) has biased composition (polar residues). The disordered stretch occupies residues 1 to 20 (MTENVNSSGDSAIKSEDKEE). In terms of domain architecture, Trm1 methyltransferase spans 22–441 (TVIQEGQAKV…APMHLLWDIY (420 aa)). Arg47, Arg104, and Asp122 together coordinate S-adenosyl-L-methionine. Zn(2+) is bound by residues Cys286, Cys289, Cys325, and Cys328. A disordered region spans residues 498–526 (KGKNWGPRQKAKGSVNSTKAGFQLTEHKE).

This sequence belongs to the class I-like SAM-binding methyltransferase superfamily. Trm1 family.

It carries out the reaction guanosine(26) in tRNA + 2 S-adenosyl-L-methionine = N(2)-dimethylguanosine(26) in tRNA + 2 S-adenosyl-L-homocysteine + 2 H(+). Its function is as follows. Dimethylates a single guanine residue at position 26 of most tRNAs using S-adenosyl-L-methionine as donor of the methyl groups. In Caenorhabditis elegans, this protein is tRNA (guanine(26)-N(2))-dimethyltransferase (trm-1).